Reading from the N-terminus, the 179-residue chain is Inner membrane-spanning protein YciB (179 aa).

The next 5 helical transmembrane spans lie at 22–42 (IYAA…YSWV), 50–70 (MALI…FFHN), 76–96 (WKVT…QWVM), 121–141 (LAWA…AFWL), and 149–169 (FKVF…GIYI).

The protein belongs to the YciB family.

It localises to the cell inner membrane. Plays a role in cell envelope biogenesis, maintenance of cell envelope integrity and membrane homeostasis. The sequence is that of Inner membrane-spanning protein YciB from Klebsiella pneumoniae subsp. pneumoniae (strain ATCC 700721 / MGH 78578).